Consider the following 480-residue polypeptide: Protein nucleotidyltransferase YdiU (480 aa).

ATP contacts are provided by Gly-86, Gly-88, Arg-89, Lys-109, Asp-121, Gly-122, Arg-172, and Arg-179. Asp-248 functions as the Proton acceptor in the catalytic mechanism. The Mg(2+) site is built by Asn-249 and Asp-258. Asp-258 contributes to the ATP binding site.

The protein belongs to the SELO family. It depends on Mg(2+) as a cofactor. Mn(2+) serves as cofactor.

It carries out the reaction L-seryl-[protein] + ATP = 3-O-(5'-adenylyl)-L-seryl-[protein] + diphosphate. The enzyme catalyses L-threonyl-[protein] + ATP = 3-O-(5'-adenylyl)-L-threonyl-[protein] + diphosphate. It catalyses the reaction L-tyrosyl-[protein] + ATP = O-(5'-adenylyl)-L-tyrosyl-[protein] + diphosphate. The catalysed reaction is L-histidyl-[protein] + UTP = N(tele)-(5'-uridylyl)-L-histidyl-[protein] + diphosphate. It carries out the reaction L-seryl-[protein] + UTP = O-(5'-uridylyl)-L-seryl-[protein] + diphosphate. The enzyme catalyses L-tyrosyl-[protein] + UTP = O-(5'-uridylyl)-L-tyrosyl-[protein] + diphosphate. Nucleotidyltransferase involved in the post-translational modification of proteins. It can catalyze the addition of adenosine monophosphate (AMP) or uridine monophosphate (UMP) to a protein, resulting in modifications known as AMPylation and UMPylation. This chain is Protein nucleotidyltransferase YdiU, found in Salmonella paratyphi A (strain ATCC 9150 / SARB42).